The following is a 257-amino-acid chain: tRNA (guanine-N(1)-)-methyltransferase (257 aa).

S-adenosyl-L-methionine contacts are provided by residues G113 and I133–L138.

It belongs to the RNA methyltransferase TrmD family. In terms of assembly, homodimer.

The protein localises to the cytoplasm. It catalyses the reaction guanosine(37) in tRNA + S-adenosyl-L-methionine = N(1)-methylguanosine(37) in tRNA + S-adenosyl-L-homocysteine + H(+). In terms of biological role, specifically methylates guanosine-37 in various tRNAs. The protein is tRNA (guanine-N(1)-)-methyltransferase of Cronobacter sakazakii (strain ATCC BAA-894) (Enterobacter sakazakii).